Here is a 240-residue protein sequence, read N- to C-terminus: 1-(5-phosphoribosyl)-5-[(5-phosphoribosylamino)methylideneamino] imidazole-4-carboxamide isomerase (240 aa).

D9 functions as the Proton acceptor in the catalytic mechanism. D131 acts as the Proton donor in catalysis.

The protein belongs to the HisA/HisF family.

It is found in the cytoplasm. The catalysed reaction is 1-(5-phospho-beta-D-ribosyl)-5-[(5-phospho-beta-D-ribosylamino)methylideneamino]imidazole-4-carboxamide = 5-[(5-phospho-1-deoxy-D-ribulos-1-ylimino)methylamino]-1-(5-phospho-beta-D-ribosyl)imidazole-4-carboxamide. The protein operates within amino-acid biosynthesis; L-histidine biosynthesis; L-histidine from 5-phospho-alpha-D-ribose 1-diphosphate: step 4/9. This chain is 1-(5-phosphoribosyl)-5-[(5-phosphoribosylamino)methylideneamino] imidazole-4-carboxamide isomerase, found in Azobacteroides pseudotrichonymphae genomovar. CFP2.